The primary structure comprises 235 residues: Ion-translocating oxidoreductase complex subunit E (235 aa).

The next 5 helical transmembrane spans lie at 63–83, 93–113, 117–137, 152–172, and 206–226; these read LGLG…ISLF, IPIY…LMNA, TLYQ…IIIG, IWDG…LGAL, and SFLL…LLAI.

Belongs to the NqrDE/RnfAE family. As to quaternary structure, the complex is composed of six subunits: RnfA, RnfB, RnfC, RnfD, RnfE and RnfG.

It localises to the cell inner membrane. In terms of biological role, part of a membrane-bound complex that couples electron transfer with translocation of ions across the membrane. The protein is Ion-translocating oxidoreductase complex subunit E of Haemophilus influenzae (strain ATCC 51907 / DSM 11121 / KW20 / Rd).